The chain runs to 216 residues: Probable transaldolase (216 aa).

K85 serves as the catalytic Schiff-base intermediate with substrate.

The protein belongs to the transaldolase family. Type 3B subfamily.

The protein resides in the cytoplasm. The enzyme catalyses D-sedoheptulose 7-phosphate + D-glyceraldehyde 3-phosphate = D-erythrose 4-phosphate + beta-D-fructose 6-phosphate. The protein operates within carbohydrate degradation; pentose phosphate pathway; D-glyceraldehyde 3-phosphate and beta-D-fructose 6-phosphate from D-ribose 5-phosphate and D-xylulose 5-phosphate (non-oxidative stage): step 2/3. Its function is as follows. Transaldolase is important for the balance of metabolites in the pentose-phosphate pathway. The sequence is that of Probable transaldolase from Dehalococcoides mccartyi (strain ATCC BAA-2266 / KCTC 15142 / 195) (Dehalococcoides ethenogenes (strain 195)).